Consider the following 217-residue polypeptide: Small ribosomal subunit protein uS3 (217 aa).

Residues 38–106 (IRKFIDNELK…KVHINVIEIK (69 aa)) enclose the KH type-2 domain.

The protein belongs to the universal ribosomal protein uS3 family. In terms of assembly, part of the 30S ribosomal subunit. Forms a tight complex with proteins S10 and S14.

Its function is as follows. Binds the lower part of the 30S subunit head. Binds mRNA in the 70S ribosome, positioning it for translation. This chain is Small ribosomal subunit protein uS3 (rpsC), found in Staphylococcus aureus (strain COL).